Consider the following 70-residue polypeptide: Disintegrin triflavin (70 aa).

The Disintegrin domain maps to 1 to 70 (GEECDCGSPS…SADCPRWNGL (70 aa)). Disulfide bonds link Cys-4–Cys-19, Cys-6–Cys-14, Cys-13–Cys-36, Cys-27–Cys-33, Cys-32–Cys-57, and Cys-45–Cys-64. Residues 49–51 (RGD) carry the Cell attachment site motif.

The protein belongs to the venom metalloproteinase (M12B) family. P-II subfamily. P-IIa sub-subfamily. In terms of assembly, monomer. As to expression, expressed by the venom gland.

Its subcellular location is the secreted. Functionally, inhibits fibrinogen interaction with platelets. Acts by binding to alpha-IIb/beta-3 (ITGA2B/ITGB3) on the platelet surface and inhibits aggregation induced by ADP, thrombin, platelet-activating factor and collagen. This is Disintegrin triflavin from Protobothrops flavoviridis (Habu).